Reading from the N-terminus, the 354-residue chain is Probable protein phosphatase 2C 27 (354 aa).

The PPM-type phosphatase domain occupies 54–319; it reads RSGDWSDIGG…DNLTAVMVSF (266 aa). Mn(2+) contacts are provided by Asp98, Gly99, Asp267, and Asp310.

Belongs to the PP2C family. Requires Mg(2+) as cofactor. The cofactor is Mn(2+).

The enzyme catalyses O-phospho-L-seryl-[protein] + H2O = L-seryl-[protein] + phosphate. It carries out the reaction O-phospho-L-threonyl-[protein] + H2O = L-threonyl-[protein] + phosphate. This Oryza sativa subsp. japonica (Rice) protein is Probable protein phosphatase 2C 27.